We begin with the raw amino-acid sequence, 161 residues long: MHEISLSDVSSLVGQELGTSKWITIDQAMINLFADATHDHQFIHVDPNRAAAESPFGGAIAHGFLTLALLSVMNFSGMPKFREQTMGINYGFDRVRFISPVRTGSRVHGRFVLSDCRLRRASILMTAYNVTVEIENENKPALTANWIAIAQFNPKDRPKAG.

The MaoC-like domain maps to 10–130 (SSLVGQELGT…ASILMTAYNV (121 aa)).

This sequence to the R.leguminosarum biovar viciae counterpart.

Involved in the production of the root hair deformation (HAD) factor specifically on medicago. This Rhizobium meliloti (strain 1021) (Ensifer meliloti) protein is Nodulation protein N (nodN).